Consider the following 874-residue polypeptide: Alanine--tRNA ligase (874 aa).

H564, H568, C665, and H669 together coordinate Zn(2+).

This sequence belongs to the class-II aminoacyl-tRNA synthetase family. Zn(2+) serves as cofactor.

It is found in the cytoplasm. It catalyses the reaction tRNA(Ala) + L-alanine + ATP = L-alanyl-tRNA(Ala) + AMP + diphosphate. Catalyzes the attachment of alanine to tRNA(Ala) in a two-step reaction: alanine is first activated by ATP to form Ala-AMP and then transferred to the acceptor end of tRNA(Ala). Also edits incorrectly charged Ser-tRNA(Ala) and Gly-tRNA(Ala) via its editing domain. The sequence is that of Alanine--tRNA ligase from Paraburkholderia xenovorans (strain LB400).